A 1172-amino-acid polypeptide reads, in one-letter code: MEESPPKQKSNTKVAQHEGQQDLNTTRHMNVELKHRPKLERHLKLGMIPVVYMKQREEILYPAQSLKEENLIQNFTSLPLLQKLYPKDPENMVRKSWASCIPEEGGHMINIQDLFGPNIGTQKEPQLVIIEGAAGIGKSTLARLVKRAWKEGQLYRDHFQHVFFFSCRELAQCKKLSLAELIAQGQEVPTAPINQILSHPEKLLFILDGIDEPAWVLADQNPELCLHWSQRQPVHTLLGSLLGKSILPEAFFLLTTRTTALQKFIPSLPMPCQVEVLGFSGIERENYFYKYFANQRHAITAFMMVESNPVLLTLCEVPWVCWLVCTCLKKQMEQGRVLSLKSQTTTALCLKYPSLTIPDKHRRTQVKALCSLAAEGIWKRRTLFSESDLCKQGLDEDAVATFLKTGVLQKQASSLSYSFAHLCLQEFFAAISCILEDSEERHGNMEMDRIVETLVERYGRQNLFEAPTVRFLFGLLGKEGVKGMEKLFSCSLHGKTKLKLLWHILGKSQPHQPSCLGLLHCLYENQDMELLTHVMHDLQGTIVPGPNDIAHTVLQTNVKQLVVQTDMELMVATFCIQFYCHVRTLQLNMEKQQGYALTSPRMVLYRWTPITNASWEILFYNLKFTRNLEGLDLSGNSLRYSVVQSLCNTLRYPGCQLKTLWLVKCGLTSRYCSLLASVLSAHSSLTELYLQLNDLGDDGVRMLCEGLRNPVCNLSILWLDLSSLSAQVITELRTLEEKNPKLYIRSIWMPHMMVPTENMDEEAILTTFKQQRQESGDKPMEILGTEEDFWGPTGPVATELVDRVRNLYRVQLPMAGSYHCPSTGLHFVVTRAVTIEIEFCAWSQFLDKTPLQQSHMVVGPLFDIKAEQGAVTAVYLPHFVSLKDTEASTFDFKVAHFQEHGIVLETPDRVKPGYTVLKNPSFSPMGDVLRIIPADRHFIPITSITLIYYRLNLEEVTLHLYLVPSDCTIQKAIDDEEMKFQFVRINKPPPVDNLFIGSRYIVSGSENLEITPKELELCYRSSKEFQLFSEIYVGNMGSEIKLQIKNKKHMRLIWEALLKPGDLRPALPRIAQALKDAPSLLHFMDQHREQLVARVTSVDPLLDKLHGLVLNEESYEAVRAENTNQDKMRKLFNLSRSWSRACKDLFYQALKETHPHLVMDLLEKSGGVSLGS.

The segment at 1–22 (MEESPPKQKSNTKVAQHEGQQD) is disordered. An NACHT domain is found at 126–435 (QLVIIEGAAG…EFFAAISCIL (310 aa)). Residue 132 to 139 (GAAGIGKS) coordinates ATP. LRR repeat units lie at residues 627–647 (NLEGLDLSGNSLRYSVVQSLC) and 684–704 (SLTELYLQLNDLGDDGVRMLC). The ZU5 stretch occupies residues 789 to 922 (FWGPTGPVAT…GYTVLKNPSF (134 aa)). The region spanning 789-1072 (FWGPTGPVAT…LRPALPRIAQ (284 aa)) is the FIIND domain. Residues 923 to 1072 (SPMGDVLRII…LRPALPRIAQ (150 aa)) are UPA. The 84-residue stretch at 1082–1165 (HFMDQHREQL…HLVMDLLEKS (84 aa)) folds into the CARD domain.

It belongs to the NLRP family. In terms of processing, in contrast to allele 1 and 2, not able to mediate autocatalytic cleavage. As to expression, expressed in macrophages.

It is found in the cytoplasm. The protein resides in the cytosol. In contrast to allele 1, does not undergo autocatalytic cleavage within the FIIND domain and its mode of activation remains unclear. In contrast to alleles 1 and 2, allele 3 is not activated by Val-boroPro (Talabostat, PT-100). Not activated by cleavage by B.anthracis lethal toxin (LT) endopeptidase. Not activated by metabolic inhibitors, such as 2-deoxy-D-glucose and sodium azide. Functionally, may act as the sensor component of the Nlrp1b inflammasome, which mediates inflammasome activation in response to various pathogen-associated signals, leading to subsequent pyroptosis. Inflammasomes are supramolecular complexes that assemble in the cytosol in response to pathogens and other damage-associated signals and play critical roles in innate immunity and inflammation. May act as a recognition receptor (PRR), which recognizes specific pathogens and other damage-associated signals and forms an inflammasome complex: the inflammasome directly recruits pro-caspase-1 (proCASP1) independently of PYCARD/ASC and promotes caspase-1 (CASP1) activation, which subsequently cleaves and activates inflammatory cytokines IL1B and IL18 and gasdermin-D (GSDMD), leading to pyroptosis. In the absence of GSDMD expression, the Nlrp1b inflammasome is able to recruit and activate CASP8, leading to activation of gasdermin-E (GSDME). Contrary to Nlrp1b allele 1, allele 3 is not activated by Bacillus anthracis lethal toxin. The absence of autocatalytic cleavage within the FIIND domain, which regulates activation in other alleles, suggests that allele 3 may be non-functional. This Mus musculus (Mouse) protein is NACHT, LRR and PYD domains-containing protein 1b allele 3.